A 227-amino-acid chain; its full sequence is Ribosomal RNA large subunit methyltransferase E (227 aa).

S-adenosyl-L-methionine-binding residues include Gly78, Trp80, Asp103, Asp119, and Asp143. Lys183 serves as the catalytic Proton acceptor.

Belongs to the class I-like SAM-binding methyltransferase superfamily. RNA methyltransferase RlmE family.

It is found in the cytoplasm. It catalyses the reaction uridine(2552) in 23S rRNA + S-adenosyl-L-methionine = 2'-O-methyluridine(2552) in 23S rRNA + S-adenosyl-L-homocysteine + H(+). Specifically methylates the uridine in position 2552 of 23S rRNA at the 2'-O position of the ribose in the fully assembled 50S ribosomal subunit. The sequence is that of Ribosomal RNA large subunit methyltransferase E from Rickettsia typhi (strain ATCC VR-144 / Wilmington).